We begin with the raw amino-acid sequence, 463 residues long: Toxin CaTX-A (463 aa).

The signal sequence occupies residues 1–18 (MSRGYSLHLVLFLVLSTA).

Belongs to the jellyfish toxin family. Type II subfamily. In terms of assembly, oligomer. Contains disulfide bonds. It is suggested that CaTX-B is synthesized in the tentacle, is modified (become CaTX-A) and then migrates to the nematocyst.

It is found in the secreted. It localises to the nematocyst. The protein localises to the target cell membrane. Functionally, has potent hemolytic activity. Is lethal to crayfish. Causes cutaneous inflammation in humans. May act as a pore-forming toxin, disrupting normal transmembrane ion concentration gradients in susceptible cells. In Carybdea alata (Hawaiian box jellyfish), this protein is Toxin CaTX-A.